The sequence spans 687 residues: Glycine--tRNA ligase beta subunit (687 aa).

The protein belongs to the class-II aminoacyl-tRNA synthetase family. As to quaternary structure, tetramer of two alpha and two beta subunits.

Its subcellular location is the cytoplasm. The catalysed reaction is tRNA(Gly) + glycine + ATP = glycyl-tRNA(Gly) + AMP + diphosphate. This Trichlorobacter lovleyi (strain ATCC BAA-1151 / DSM 17278 / SZ) (Geobacter lovleyi) protein is Glycine--tRNA ligase beta subunit.